The chain runs to 459 residues: Protein phosphatase 1M (459 aa).

Residues 1–10 (MSAGWFRRRF) show a composition bias toward basic residues. The segment at 1–64 (MSAGWFRRRF…SRPVRSPARG (64 aa)) is disordered. Pro residues predominate over residues 14–27 (EPLPAPRPPGPHAS). Low complexity predominate over residues 38-48 (RGSSSSPGAAD). 2 residues coordinate Mn(2+): Asp-125 and Gly-126. The 298-residue stretch at 162-459 (MHLNGRCICP…HSQGQESSDH (298 aa)) folds into the PPM-type phosphatase domain.

Belongs to the PP2C family. Mg(2+) is required as a cofactor. Requires Mn(2+) as cofactor.

It localises to the nucleus. The catalysed reaction is O-phospho-L-seryl-[protein] + H2O = L-seryl-[protein] + phosphate. It catalyses the reaction O-phospho-L-threonyl-[protein] + H2O = L-threonyl-[protein] + phosphate. The polypeptide is Protein phosphatase 1M (PPM1M) (Homo sapiens (Human)).